We begin with the raw amino-acid sequence, 168 residues long: MNDNLVCLGIITSPHGIKGAVKVKTFTEKPENISLYGKLISGDENYKIDSVSVIGDNLVIATISGVNSRNEAELLRNKKLYIERSKLPELNDEDEFYQSDLVDMEVRLKSNELYGYVKSVYNFGSGDILEILVISTKKRIMLSFTKEIFPHINIKGRYIVLNIPEFID.

Positions 93-168 constitute a PRC barrel domain; sequence EDEFYQSDLV…IVLNIPEFID (76 aa).

It belongs to the RimM family. In terms of assembly, binds ribosomal protein uS19.

The protein resides in the cytoplasm. Its function is as follows. An accessory protein needed during the final step in the assembly of 30S ribosomal subunit, possibly for assembly of the head region. Essential for efficient processing of 16S rRNA. May be needed both before and after RbfA during the maturation of 16S rRNA. It has affinity for free ribosomal 30S subunits but not for 70S ribosomes. This Wolbachia pipientis wMel protein is Ribosome maturation factor RimM.